An 893-amino-acid chain; its full sequence is DNA mismatch repair protein MutS (893 aa).

Over residues 1 to 17 (MESTMSSASTNASPPSA) the composition is skewed to low complexity. The segment at 1–22 (MESTMSSASTNASPPSASEKHT) is disordered. Position 641–648 (641–648 (GPNMGGKS)) interacts with ATP.

The protein belongs to the DNA mismatch repair MutS family.

Functionally, this protein is involved in the repair of mismatches in DNA. It is possible that it carries out the mismatch recognition step. This protein has a weak ATPase activity. The sequence is that of DNA mismatch repair protein MutS from Herminiimonas arsenicoxydans.